Here is a 471-residue protein sequence, read N- to C-terminus: F-box only protein 3 (471 aa).

Positions 10–56 constitute an F-box domain; the sequence is PLTLESLPTDPLLLILSFLDYRDLINCCYVSRRLSQLSSHDPLWRRH. The ApaG domain occupies 278-408; it reads VATTGDITVS…FHMACPTFRV (131 aa). Over residues 419–451 the composition is skewed to acidic residues; the sequence is EYEEMEEEEEEEEEEDEDDDSADMDESDEDDEE. The interval 419–455 is disordered; that stretch reads EYEEMEEEEEEEEEEDEDDDSADMDESDEDDEEERRR.

As to quaternary structure, part of a SCF (SKP1-cullin-F-box) protein ligase complex SCF(FBXO3) consisting of FBXO3, SKP1, CUL1 and RBX1. Interacts with PML, interaction is direct and takes place either alone or within the SCF complex. In terms of assembly, (Microbial infection) Interacts (via ApaG domain) with Rift valley fever virus NSs helical filament; this interaction forms a filamentous E3 which mediates degradation of TFIIH complex through interaction with GT2H1.

It localises to the nucleus. Its pathway is protein modification; protein ubiquitination. Substrate recognition component of the SCF (SKP1-CUL1-F-box protein)-type E3 ubiquitin ligase complex, SCF(FBXO3), which mediates the ubiquitination and subsequent proteasomal degradation of target proteins. Mediates the ubiquitination of HIPK2 and probably that of EP300, leading to rapid degradation by the proteasome. In the presence of PML, HIPK2 ubiquitination still occurs, but degradation is prevented. PML, HIPK2 and FBXO3 may act synergically to activate p53/TP53-dependent transactivation. The SCF(FBXO3) also acts as a regulator of inflammation by mediating ubiquitination and degradation of FBXL2 in response to lipopolysaccharide (LPS). The SCF(FBXO3) complex specifically recognizes FBXL2 phosphorylated at 'Thr-404' and promotes its ubiquitination. In terms of biological role, (Microbial infection) Associates with the Rift valley fever virus NSs to form a remodeled E3 ligase that triggers efficient proteasomal degradation of targeted proteins. The filamentous E3 ligase targets the TFIIH complex leading to robust inhibition of antiviral immunity and enhances viral pathogenesis. The chain is F-box only protein 3 from Homo sapiens (Human).